The following is a 137-amino-acid chain: Large ribosomal subunit protein uL16 (137 aa).

The span at 1 to 13 (MLQPKRRKYRKEQ) shows a compositional bias: basic residues. Residues 1 to 22 (MLQPKRRKYRKEQKGRNTGVAT) are disordered.

It belongs to the universal ribosomal protein uL16 family. Part of the 50S ribosomal subunit.

Functionally, binds 23S rRNA and is also seen to make contacts with the A and possibly P site tRNAs. This is Large ribosomal subunit protein uL16 from Polynucleobacter asymbioticus (strain DSM 18221 / CIP 109841 / QLW-P1DMWA-1) (Polynucleobacter necessarius subsp. asymbioticus).